Reading from the N-terminus, the 28-residue chain is Dermaseptin-DI2 (28 aa).

As to expression, expressed by the skin glands.

It is found in the secreted. Its function is as follows. Has antibacterial activity against the Gram-positive bacteria S.aureus and E.faecalis, and the Gram-negative bacteria P.aeruginosa and E.coli. Has antiprotozoal activity against T.cruzi. Has antifungal activity against the yeasts C.tropicalis (MIC=10.9 uM), C.guilliermondii (MIC=21.8 uM), C.albicans (MIC=21.8 uM) and C.albicans ATCC 1023 (MIC=10.9 uM). Decreases viability of murine peritoneal cells. Fuses to, and disrupts liposomes. This chain is Dermaseptin-DI2, found in Phyllomedusa distincta (Monkey frog).